Consider the following 435-residue polypeptide: D-amino acid dehydrogenase (435 aa).

FAD is bound at residue 3–17 (VIVLGGGVLGVSTAW).

The protein belongs to the DadA oxidoreductase family. It depends on FAD as a cofactor.

The catalysed reaction is a D-alpha-amino acid + A + H2O = a 2-oxocarboxylate + AH2 + NH4(+). The protein operates within amino-acid degradation; D-alanine degradation; NH(3) and pyruvate from D-alanine: step 1/1. Oxidative deamination of D-amino acids. The polypeptide is D-amino acid dehydrogenase (Chromobacterium violaceum (strain ATCC 12472 / DSM 30191 / JCM 1249 / CCUG 213 / NBRC 12614 / NCIMB 9131 / NCTC 9757 / MK)).